Consider the following 121-residue polypeptide: Large ribosomal subunit protein eL34B (121 aa).

It belongs to the eukaryotic ribosomal protein eL34 family. Component of the large ribosomal subunit (LSU). Mature yeast ribosomes consist of a small (40S) and a large (60S) subunit. The 40S small subunit contains 1 molecule of ribosomal RNA (18S rRNA) and 33 different proteins (encoded by 57 genes). The large 60S subunit contains 3 rRNA molecules (25S, 5.8S and 5S rRNA) and 46 different proteins (encoded by 81 genes).

It localises to the cytoplasm. In terms of biological role, component of the ribosome, a large ribonucleoprotein complex responsible for the synthesis of proteins in the cell. The small ribosomal subunit (SSU) binds messenger RNAs (mRNAs) and translates the encoded message by selecting cognate aminoacyl-transfer RNA (tRNA) molecules. The large subunit (LSU) contains the ribosomal catalytic site termed the peptidyl transferase center (PTC), which catalyzes the formation of peptide bonds, thereby polymerizing the amino acids delivered by tRNAs into a polypeptide chain. The nascent polypeptides leave the ribosome through a tunnel in the LSU and interact with protein factors that function in enzymatic processing, targeting, and the membrane insertion of nascent chains at the exit of the ribosomal tunnel. The polypeptide is Large ribosomal subunit protein eL34B (Saccharomyces cerevisiae (strain ATCC 204508 / S288c) (Baker's yeast)).